A 341-amino-acid polypeptide reads, in one-letter code: Ketol-acid reductoisomerase (NADP(+)) (341 aa).

In terms of domain architecture, KARI N-terminal Rossmann spans 2-182; it reads TDIVYDKDAD…GGLRAGGIRT (181 aa). NADP(+)-binding positions include 25 to 28, lysine 48, serine 51, serine 53, and 83 to 86; these read YGSQ and DQHQ. Histidine 108 is an active-site residue. Glycine 134 serves as a coordination point for NADP(+). Residues 183 to 328 enclose the KARI C-terminal knotted domain; the sequence is TFTEETETDL…RELRKLFAWN (146 aa). Mg(2+) is bound by residues aspartate 191, glutamate 195, glutamate 227, and glutamate 231. Serine 252 is a binding site for substrate.

The protein belongs to the ketol-acid reductoisomerase family. It depends on Mg(2+) as a cofactor.

The enzyme catalyses (2R)-2,3-dihydroxy-3-methylbutanoate + NADP(+) = (2S)-2-acetolactate + NADPH + H(+). It carries out the reaction (2R,3R)-2,3-dihydroxy-3-methylpentanoate + NADP(+) = (S)-2-ethyl-2-hydroxy-3-oxobutanoate + NADPH + H(+). The protein operates within amino-acid biosynthesis; L-isoleucine biosynthesis; L-isoleucine from 2-oxobutanoate: step 2/4. It participates in amino-acid biosynthesis; L-valine biosynthesis; L-valine from pyruvate: step 2/4. Involved in the biosynthesis of branched-chain amino acids (BCAA). Catalyzes an alkyl-migration followed by a ketol-acid reduction of (S)-2-acetolactate (S2AL) to yield (R)-2,3-dihydroxy-isovalerate. In the isomerase reaction, S2AL is rearranged via a Mg-dependent methyl migration to produce 3-hydroxy-3-methyl-2-ketobutyrate (HMKB). In the reductase reaction, this 2-ketoacid undergoes a metal-dependent reduction by NADPH to yield (R)-2,3-dihydroxy-isovalerate. In Clavibacter sepedonicus (Clavibacter michiganensis subsp. sepedonicus), this protein is Ketol-acid reductoisomerase (NADP(+)).